A 473-amino-acid chain; its full sequence is Fumarate hydratase class II (473 aa).

Substrate contacts are provided by residues 104–106 (SGT), 128–131 (HPND), 138–140 (SSN), and T186. H187 serves as the catalytic Proton donor/acceptor. S318 is a catalytic residue. Substrate contacts are provided by residues S319 and 324-326 (KVN).

This sequence belongs to the class-II fumarase/aspartase family. Fumarase subfamily. Homotetramer.

Its subcellular location is the cytoplasm. The catalysed reaction is (S)-malate = fumarate + H2O. It functions in the pathway carbohydrate metabolism; tricarboxylic acid cycle; (S)-malate from fumarate: step 1/1. Its function is as follows. Involved in the TCA cycle. Catalyzes the stereospecific interconversion of fumarate to L-malate. The polypeptide is Fumarate hydratase class II (Corynebacterium glutamicum (strain ATCC 13032 / DSM 20300 / JCM 1318 / BCRC 11384 / CCUG 27702 / LMG 3730 / NBRC 12168 / NCIMB 10025 / NRRL B-2784 / 534)).